The primary structure comprises 334 residues: MGEPIRVLVTGAAGQIAYSLLYSIAKGDVFGKEQPLVLVLLDITPMMTVLEGVVMELQDCALPLLREVIPTDKEEVAFKDLDIAILVGSMPRREGMERKDLLKANVKIFKSQGAALDKYAKKTVKVVVVGNPANTNCLIASKSAPSIPKENFSCLTRLDHNRAKSQIALKLGVTSNDVKNVIIWGNHSSTQYPDVNHAKVNVKGKEVGVYEAIKDDSWLKGDFILTVQQRGAAVIKARKLSSAMSAAKAICDHVRDIWFGTPAGEFVSMGVISDGNSYGVPEDLLYSFPVVIKDKTWKFVEGLPINDFSREKMDLTAKELTEEKETAVEFLSSA.

11–17 (GAAGQIA) serves as a coordination point for NAD(+). Residues arginine 92 and arginine 98 each contribute to the substrate site. Residues asparagine 105, glutamine 112, and 129 to 131 (VGN) contribute to the NAD(+) site. Substrate contacts are provided by asparagine 131 and arginine 162. Histidine 187 functions as the Proton acceptor in the catalytic mechanism.

The protein belongs to the LDH/MDH superfamily. MDH type 2 family. Homodimer.

The protein localises to the cytoplasm. Its subcellular location is the cytosol. It carries out the reaction (S)-malate + NAD(+) = oxaloacetate + NADH + H(+). It catalyses the reaction (S)-2-hydroxyglutarate + NAD(+) = 2-oxoglutarate + NADH + H(+). Functionally, catalyzes the reduction of aromatic alpha-keto acids in the presence of NADH. Plays essential roles in the malate-aspartate shuttle and the tricarboxylic acid cycle, important in mitochondrial NADH supply for oxidative phosphorylation. Catalyzes the reduction of 2-oxoglutarate to 2-hydroxyglutarate, leading to elevated reactive oxygen species (ROS). The polypeptide is Malate dehydrogenase, cytoplasmic (MDH1) (Gallus gallus (Chicken)).